A 644-amino-acid polypeptide reads, in one-letter code: Macrolide export ATP-binding/permease protein MacB (644 aa).

Residues 4-242 form the ABC transporter domain; sequence IECKNINRYF…SNVGRIQEKA (239 aa). 40–47 contacts ATP; the sequence is GQSGSGKS. 4 helical membrane passes run 270–290, 524–544, 574–594, and 607–627; these read LLTMLGIIIGIASVVSVVALG, IALISLVVGGIGVMNIMLVSV, LICVIGGLVGVGLSAAVSLVF, and AMSVIGAVACSTGIGIAFGFM.

Belongs to the ABC transporter superfamily. Macrolide exporter (TC 3.A.1.122) family. Homodimer.

Its subcellular location is the cell inner membrane. Non-canonical ABC transporter that contains transmembrane domains (TMD), which form a pore in the inner membrane, and an ATP-binding domain (NBD), which is responsible for energy generation. Confers resistance against macrolides. This is Macrolide export ATP-binding/permease protein MacB from Neisseria meningitidis serogroup A / serotype 4A (strain DSM 15465 / Z2491).